The primary structure comprises 490 residues: Cytochrome P450 2C7 (490 aa).

Arg-144 is modified (dimethylated arginine). Residue Cys-435 participates in heme binding.

It belongs to the cytochrome P450 family. It depends on heme as a cofactor.

Its subcellular location is the endoplasmic reticulum membrane. It localises to the microsome membrane. It catalyses the reaction an organic molecule + reduced [NADPH--hemoprotein reductase] + O2 = an alcohol + oxidized [NADPH--hemoprotein reductase] + H2O + H(+). Cytochromes P450 are a group of heme-thiolate monooxygenases. In liver microsomes, this enzyme is involved in an NADPH-dependent electron transport pathway. It oxidizes a variety of structurally unrelated compounds, including steroids, fatty acids, and xenobiotics. In Rattus norvegicus (Rat), this protein is Cytochrome P450 2C7 (Cyp2c7).